Consider the following 262-residue polypeptide: Acetylglutamate kinase (262 aa).

Substrate-binding positions include 48–49, Arg70, and Asn162; that span reads GG.

It belongs to the acetylglutamate kinase family. ArgB subfamily.

The protein resides in the cytoplasm. The catalysed reaction is N-acetyl-L-glutamate + ATP = N-acetyl-L-glutamyl 5-phosphate + ADP. The protein operates within amino-acid biosynthesis; L-arginine biosynthesis; N(2)-acetyl-L-ornithine from L-glutamate: step 2/4. Its function is as follows. Catalyzes the ATP-dependent phosphorylation of N-acetyl-L-glutamate. The sequence is that of Acetylglutamate kinase from Vibrio cholerae serotype O1 (strain ATCC 39541 / Classical Ogawa 395 / O395).